The primary structure comprises 342 residues: Succinylglutamate desuccinylase (342 aa).

Positions 63, 66, and 159 each coordinate Zn(2+). Residue E222 is part of the active site.

The protein belongs to the AspA/AstE family. Succinylglutamate desuccinylase subfamily. The cofactor is Zn(2+).

The catalysed reaction is N-succinyl-L-glutamate + H2O = L-glutamate + succinate. Its pathway is amino-acid degradation; L-arginine degradation via AST pathway; L-glutamate and succinate from L-arginine: step 5/5. Transforms N(2)-succinylglutamate into succinate and glutamate. The protein is Succinylglutamate desuccinylase of Paraburkholderia xenovorans (strain LB400).